A 175-amino-acid chain; its full sequence is Photosynthetic NDH subunit of subcomplex B 4, chloroplastic (175 aa).

Residues 1–24 (MAEAFTSFTFTNLHIPSSYNHSPK) constitute a chloroplast transit peptide. Residues 95-111 (VYMFYIMFTCWGCLYFG) form a helical membrane-spanning segment.

Part of the chloroplast NDH complex, composed of a mixture of chloroplast and nucleus encoded subunits. Component of the NDH subcomplex B, at least composed of PnsB1, PnsB2, PnsB3, PnsB4 and PnsB5.

Its subcellular location is the plastid. The protein resides in the chloroplast thylakoid membrane. In terms of biological role, NDH shuttles electrons from NAD(P)H:plastoquinone, via FMN and iron-sulfur (Fe-S) centers, to quinones in the photosynthetic chain and possibly in a chloroplast respiratory chain. The immediate electron acceptor for the enzyme in this species is believed to be plastoquinone. Couples the redox reaction to proton translocation, and thus conserves the redox energy in a proton gradient. The polypeptide is Photosynthetic NDH subunit of subcomplex B 4, chloroplastic (Arabidopsis thaliana (Mouse-ear cress)).